The following is a 243-amino-acid chain: Sarcospan (243 aa).

Positions methionine 1 to glutamate 43 are disordered. Residues methionine 1 to proline 53 lie on the Cytoplasmic side of the membrane. Low complexity predominate over residues proline 7–proline 24. A helical membrane pass occupies residues leucine 54–methionine 74. Residues alanine 75–threonine 86 are Extracellular-facing. A helical membrane pass occupies residues proline 87–valine 107. Over serine 108–lysine 122 the chain is Cytoplasmic. Residues leucine 123–alanine 143 traverse the membrane as a helical segment. The Extracellular segment spans residues alanine 144–leucine 193. Residues phenylalanine 194–phenylalanine 214 traverse the membrane as a helical segment. Over valine 215 to isoleucine 243 the chain is Cytoplasmic.

Isoform 1 is expressed exclusively in heart and skeletal muscle. Isoform 2 is expressed in heart, skeletal muscle, thymus, prostate, testis, ovary, small intestine, colon and spleen.

Its subcellular location is the cell membrane. It is found in the sarcolemma. The protein resides in the postsynaptic cell membrane. In terms of biological role, component of the dystrophin-glycoprotein complex (DGC), a complex that spans the muscle plasma membrane and forms a link between the F-actin cytoskeleton and the extracellular matrix. Preferentially associates with the sarcoglycan subcomplex of the DGC. The protein is Sarcospan (SSPN) of Homo sapiens (Human).